We begin with the raw amino-acid sequence, 446 residues long: Signal recognition particle 54 kDa protein (446 aa).

GTP is bound by residues 103 to 110, 185 to 189, and 245 to 248; these read GVQGTGKT, DTAGR, and TKMD.

The protein belongs to the GTP-binding SRP family. SRP54 subfamily. Part of the signal recognition particle protein translocation system, which is composed of SRP and FtsY. Archaeal SRP consists of a 7S RNA molecule of 300 nucleotides and two protein subunits: SRP54 and SRP19.

The protein resides in the cytoplasm. It carries out the reaction GTP + H2O = GDP + phosphate + H(+). Involved in targeting and insertion of nascent membrane proteins into the cytoplasmic membrane. Binds to the hydrophobic signal sequence of the ribosome-nascent chain (RNC) as it emerges from the ribosomes. The SRP-RNC complex is then targeted to the cytoplasmic membrane where it interacts with the SRP receptor FtsY. The protein is Signal recognition particle 54 kDa protein of Metallosphaera sedula (strain ATCC 51363 / DSM 5348 / JCM 9185 / NBRC 15509 / TH2).